We begin with the raw amino-acid sequence, 629 residues long: Polygalacturonase non-catalytic subunit AroGP2 (629 aa).

The first 27 residues, 1 to 27 (MHNKILVSSYILLVLLFSLSSFNIVVA), serve as a signal peptide directing secretion. A propeptide spanning residues 28–109 (KDGDESGNPF…MCAPDLLPSL (82 aa)) is cleaved from the precursor. N-linked (GlcNAc...) asparagine glycans are attached at residues Asn-125, Asn-143, Asn-255, Asn-277, Asn-333, Asn-368, and Asn-386. Positions 267–293 (YGQNANGENQNFTSYSTNGNNPQNNFK) are enriched in polar residues. A disordered region spans residues 267-305 (YGQNANGENQNFTSYSTNGNNPQNNFKNYGVGGNGPSET). Residues 414–628 (FFREKMLKSG…FENDMTWATA (215 aa)) form the BURP domain.

Interacts with polygalacturonase to form heterodimers.

The protein resides in the secreted. It localises to the extracellular space. Its subcellular location is the apoplast. It is found in the cell wall. Its function is as follows. Non-catalytic subunit of polygalacturonase. The sequence is that of Polygalacturonase non-catalytic subunit AroGP2 (GP2) from Solanum lycopersicum (Tomato).